The primary structure comprises 173 residues: Crossover junction endodeoxyribonuclease RuvC (173 aa).

Residues aspartate 8, glutamate 67, and aspartate 139 contribute to the active site. Mg(2+) contacts are provided by aspartate 8, glutamate 67, and aspartate 139.

Belongs to the RuvC family. As to quaternary structure, homodimer which binds Holliday junction (HJ) DNA. The HJ becomes 2-fold symmetrical on binding to RuvC with unstacked arms; it has a different conformation from HJ DNA in complex with RuvA. In the full resolvosome a probable DNA-RuvA(4)-RuvB(12)-RuvC(2) complex forms which resolves the HJ. The cofactor is Mg(2+).

Its subcellular location is the cytoplasm. The catalysed reaction is Endonucleolytic cleavage at a junction such as a reciprocal single-stranded crossover between two homologous DNA duplexes (Holliday junction).. Its function is as follows. The RuvA-RuvB-RuvC complex processes Holliday junction (HJ) DNA during genetic recombination and DNA repair. Endonuclease that resolves HJ intermediates. Cleaves cruciform DNA by making single-stranded nicks across the HJ at symmetrical positions within the homologous arms, yielding a 5'-phosphate and a 3'-hydroxyl group; requires a central core of homology in the junction. The consensus cleavage sequence is 5'-(A/T)TT(C/G)-3'. Cleavage occurs on the 3'-side of the TT dinucleotide at the point of strand exchange. HJ branch migration catalyzed by RuvA-RuvB allows RuvC to scan DNA until it finds its consensus sequence, where it cleaves and resolves the cruciform DNA. This chain is Crossover junction endodeoxyribonuclease RuvC, found in Vibrio parahaemolyticus serotype O3:K6 (strain RIMD 2210633).